A 230-amino-acid polypeptide reads, in one-letter code: Large ribosomal subunit protein uL1 (230 aa).

The protein belongs to the universal ribosomal protein uL1 family. As to quaternary structure, part of the 50S ribosomal subunit.

In terms of biological role, binds directly to 23S rRNA. The L1 stalk is quite mobile in the ribosome, and is involved in E site tRNA release. Protein L1 is also a translational repressor protein, it controls the translation of the L11 operon by binding to its mRNA. The polypeptide is Large ribosomal subunit protein uL1 (Acidithiobacillus ferrooxidans (strain ATCC 53993 / BNL-5-31) (Leptospirillum ferrooxidans (ATCC 53993))).